The chain runs to 401 residues: F-box protein At2g43440 (401 aa).

In terms of domain architecture, F-box spans 7–53; the sequence is NTNSIYIVPELLEDIFLRLPLKSILKFKTVSRQWRSILESKLFVERR.

This is F-box protein At2g43440 from Arabidopsis thaliana (Mouse-ear cress).